The following is a 291-amino-acid chain: Small ribosomal subunit protein uS2 (291 aa).

The segment at Ala255–Trp291 is disordered.

It belongs to the universal ribosomal protein uS2 family. Component of the small ribosomal subunit. Mature ribosomes consist of a small (40S) and a large (60S) subunit. The 40S subunit contains about 33 different proteins and 1 molecule of RNA (18S). The 60S subunit contains about 49 different proteins and 3 molecules of RNA (25S, 5.8S and 5S). Interacts with RPS21.

Its subcellular location is the cytoplasm. In terms of biological role, required for the assembly and/or stability of the 40S ribosomal subunit. Required for the processing of the 20S rRNA-precursor to mature 18S rRNA in a late step of the maturation of 40S ribosomal subunits. The chain is Small ribosomal subunit protein uS2 from Podospora anserina (strain S / ATCC MYA-4624 / DSM 980 / FGSC 10383) (Pleurage anserina).